A 586-amino-acid chain; its full sequence is Pyruvate kinase (586 aa).

R32 serves as a coordination point for substrate. Positions 34, 36, 66, and 67 each coordinate K(+). Position 34-37 (34-37 (NFSH)) interacts with ATP. Positions 73 and 156 each coordinate ATP. Position 222 (E222) interacts with Mg(2+). Positions 245, 246, and 278 each coordinate substrate. D246 provides a ligand contact to Mg(2+).

This sequence belongs to the pyruvate kinase family. The protein in the C-terminal section; belongs to the PEP-utilizing enzyme family. It depends on Mg(2+) as a cofactor. Requires K(+) as cofactor.

It carries out the reaction pyruvate + ATP = phosphoenolpyruvate + ADP + H(+). It functions in the pathway carbohydrate degradation; glycolysis; pyruvate from D-glyceraldehyde 3-phosphate: step 5/5. The chain is Pyruvate kinase (pyk) from Staphylococcus haemolyticus (strain JCSC1435).